The following is a 316-amino-acid chain: DNA-directed RNA polymerase subunit alpha (316 aa).

The alpha N-terminal domain (alpha-NTD) stretch occupies residues methionine 1–glutamate 233. An alpha C-terminal domain (alpha-CTD) region spans residues methionine 245–aspartate 316.

This sequence belongs to the RNA polymerase alpha chain family. As to quaternary structure, in plastids the minimal PEP RNA polymerase catalytic core is composed of four subunits: alpha, beta, beta', and beta''. When a (nuclear-encoded) sigma factor is associated with the core the holoenzyme is formed, which can initiate transcription.

It localises to the plastid. The protein resides in the chloroplast. It carries out the reaction RNA(n) + a ribonucleoside 5'-triphosphate = RNA(n+1) + diphosphate. Its function is as follows. DNA-dependent RNA polymerase catalyzes the transcription of DNA into RNA using the four ribonucleoside triphosphates as substrates. The polypeptide is DNA-directed RNA polymerase subunit alpha (Cyanidioschyzon merolae (strain NIES-3377 / 10D) (Unicellular red alga)).